We begin with the raw amino-acid sequence, 182 residues long: LPS-assembly lipoprotein LptE (182 aa).

Positions Met1 to Gly19 are cleaved as a signal peptide. Cys20 carries the N-palmitoyl cysteine lipid modification. Cys20 carries S-diacylglycerol cysteine lipidation.

The protein belongs to the LptE lipoprotein family. As to quaternary structure, component of the lipopolysaccharide transport and assembly complex. Interacts with LptD.

It localises to the cell outer membrane. Its function is as follows. Together with LptD, is involved in the assembly of lipopolysaccharide (LPS) at the surface of the outer membrane. Required for the proper assembly of LptD. Binds LPS and may serve as the LPS recognition site at the outer membrane. The polypeptide is LPS-assembly lipoprotein LptE (Photorhabdus laumondii subsp. laumondii (strain DSM 15139 / CIP 105565 / TT01) (Photorhabdus luminescens subsp. laumondii)).